Here is a 381-residue protein sequence, read N- to C-terminus: O-antigen chain mannosyltransferase B (381 aa).

It belongs to the glycosyltransferase group 1 family. Glycosyltransferase 4 subfamily.

It catalyses the reaction alpha-D-mannosyl-(1-&gt;3)-N-acetyl-alpha-D-glucosaminyl-di-trans,octa-cis-undecaprenyl diphosphate + 2 GDP-alpha-D-mannose = alpha-D-mannosyl-(1-&gt;3)-alpha-D-mannosyl-(1-&gt;3)-alpha-D-mannosyl-(1-&gt;3)-N-acetyl-alpha-D-glucosaminyl-di-trans,octa-cis-undecaprenyl diphosphate + 2 GDP + 2 H(+). It participates in bacterial outer membrane biogenesis; LPS O-antigen biosynthesis. Its function is as follows. Mannosyltransferase involved in the biosynthesis of the repeat unit of the lipopolysaccharide (LPS) O-antigen region. Catalyzes the transfer of two alpha-(1-&gt;3)-linked mannose residues to the product of the WbdC enzyme during the synthesis of the adapter region. In Escherichia coli, this protein is O-antigen chain mannosyltransferase B.